A 124-amino-acid chain; its full sequence is Small ribosomal subunit protein uS12 (124 aa).

Residue aspartate 89 is modified to 3-methylthioaspartic acid.

This sequence belongs to the universal ribosomal protein uS12 family. As to quaternary structure, part of the 30S ribosomal subunit. Contacts proteins S8 and S17. May interact with IF1 in the 30S initiation complex.

Its function is as follows. With S4 and S5 plays an important role in translational accuracy. Functionally, interacts with and stabilizes bases of the 16S rRNA that are involved in tRNA selection in the A site and with the mRNA backbone. Located at the interface of the 30S and 50S subunits, it traverses the body of the 30S subunit contacting proteins on the other side and probably holding the rRNA structure together. The combined cluster of proteins S8, S12 and S17 appears to hold together the shoulder and platform of the 30S subunit. The chain is Small ribosomal subunit protein uS12 from Histophilus somni (strain 129Pt) (Haemophilus somnus).